The primary structure comprises 607 residues: Fatty acid amide hydrolase (607 aa).

Active-site charge relay system residues include lysine 204 and serine 280. Substrate is bound at residue 301-304; that stretch reads GGGS. The Acyl-ester intermediate role is filled by serine 304.

This sequence belongs to the amidase family. Forms homodimers.

It localises to the endoplasmic reticulum membrane. Its subcellular location is the cell membrane. The enzyme catalyses N-(9Z,12Z-octadecadienoyl)-ethanolamine + H2O = ethanolamine + (9Z,12Z)-octadecadienoate. Its function is as follows. Catalyzes the hydrolysis of bioactive endogenous fatty acid amides to their corresponding acids. The hydrolysis of endogenous amidated lipids terminates their participation as lipid mediators in various signaling systems. Converts a wide range of N-acylethanolamines (NAEs) to their corresponding free fatty acids and ethanolamine. The protein is Fatty acid amide hydrolase of Medicago truncatula (Barrel medic).